The sequence spans 142 residues: Crustacean hyperglycemic hormones (142 aa).

The signal sequence occupies residues 1–26 (MYSKTIPAMLAIITVAYLCALPHAHA). The residue at position 67 (Gln67) is a Pyrrolidone carboxylic acid; partial. 3 disulfides stabilise this stretch: Cys73–Cys109, Cys89–Cys105, and Cys92–Cys118. Residue Val138 is modified to Valine amide.

It belongs to the arthropod CHH/MIH/GIH/VIH hormone family. The N-terminus is blocked only in isoform CHH-II but not in isoform CHH-I. As to expression, produced by the medulla terminalis X-organ in the eyestalks and transported to the sinus gland where they are stored and released.

The protein resides in the secreted. In terms of biological role, hormone found in the sinus gland of isopods and decapods which controls the blood sugar level. Has a secretagogue action over the amylase released from the midgut gland. May act as a stress hormone and may be involved in the control of molting and reproduction. This Carcinus maenas (Common shore crab) protein is Crustacean hyperglycemic hormones.